The chain runs to 961 residues: Leucine-rich repeat-containing protein egg-6 (961 aa).

A signal peptide spans 1–18; that stretch reads MRWLTLIAVAHLIAFLSS. At 19-854 the chain is on the extracellular side; sequence AEITCPRIPE…EQNERHRNIR (836 aa). LRR repeat units follow at residues 60–78, 79–101, 103–124, 125–148, 150–172, 174–197, 199–222, 223–245, 247–269, 270–294, 305–316, 317–339, 340–363, 364–387, 388–411, 413–435, and 437–455; these read IDEL…SLPF, NGLR…AWRH, EATI…VFGN, LSTL…AFNG, SALT…SLDA, KASL…ILRN, ANLM…LMNL, PFLR…AFMN, PQLQ…RLQG, FKNL…DLPN, ITKIETLAFSNN, PNLQ…SFES, LDKL…MFDG, MKNL…SFAQ, LAHL…TFDK, SKLF…VFKK, and ISNI…SFNE. Residues 855 to 875 form a helical membrane-spanning segment; that stretch reads IITAIALAFVGAVTVVVIIFF. The Cytoplasmic segment spans residues 876 to 961; that stretch reads VNYTKKQRRL…PQAVSHRSRH (86 aa). Residues 890-943 are disordered; it reads VYRSSPSSSGSSGQNAANESGRSSAAPSPIRPPLMNIPKTPNNRTMESTFGQPQ. A compositionally biased stretch (low complexity) spans 893–902; the sequence is SSPSSSGSSG. A compositionally biased stretch (polar residues) spans 928 to 943; sequence KTPNNRTMESTFGQPQ.

In L1 larvae, expressed in a subset of epithelial cells including epidermal, vulval and rectal cells and the excretory duct and pore. Also detected in some neurons. Absent from internal epithelia such as the gut and pharyngeal tubes.

It is found in the apical cell membrane. Required for apical extracellular matrix organization and epithelial junction maintenance. The protein is Leucine-rich repeat-containing protein egg-6 of Caenorhabditis elegans.